Here is a 295-residue protein sequence, read N- to C-terminus: Pyridoxal 5'-phosphate synthase subunit PdxS (295 aa).

Asp25 contacts D-ribose 5-phosphate. Catalysis depends on Lys82, which acts as the Schiff-base intermediate with D-ribose 5-phosphate. D-ribose 5-phosphate is bound at residue Gly154. Arg166 lines the D-glyceraldehyde 3-phosphate pocket. D-ribose 5-phosphate is bound by residues Gly215 and Gly236–Ser237.

This sequence belongs to the PdxS/SNZ family. As to quaternary structure, in the presence of PdxT, forms a dodecamer of heterodimers.

It carries out the reaction aldehydo-D-ribose 5-phosphate + D-glyceraldehyde 3-phosphate + L-glutamine = pyridoxal 5'-phosphate + L-glutamate + phosphate + 3 H2O + H(+). It participates in cofactor biosynthesis; pyridoxal 5'-phosphate biosynthesis. Catalyzes the formation of pyridoxal 5'-phosphate from ribose 5-phosphate (RBP), glyceraldehyde 3-phosphate (G3P) and ammonia. The ammonia is provided by the PdxT subunit. Can also use ribulose 5-phosphate and dihydroxyacetone phosphate as substrates, resulting from enzyme-catalyzed isomerization of RBP and G3P, respectively. In Staphylococcus haemolyticus (strain JCSC1435), this protein is Pyridoxal 5'-phosphate synthase subunit PdxS.